The sequence spans 421 residues: Tyrosine--tRNA ligase (421 aa).

Position 38 (Tyr38) interacts with L-tyrosine. A 'HIGH' region motif is present at residues Pro43–His52. L-tyrosine-binding residues include Tyr169 and Gln173. The 'KMSKS' region signature appears at Lys231–Ser235. An ATP-binding site is contributed by Lys234. One can recognise an S4 RNA-binding domain in the interval Lys353–Ile419.

It belongs to the class-I aminoacyl-tRNA synthetase family. TyrS type 1 subfamily. As to quaternary structure, homodimer.

The protein resides in the cytoplasm. It catalyses the reaction tRNA(Tyr) + L-tyrosine + ATP = L-tyrosyl-tRNA(Tyr) + AMP + diphosphate + H(+). In terms of biological role, catalyzes the attachment of tyrosine to tRNA(Tyr) in a two-step reaction: tyrosine is first activated by ATP to form Tyr-AMP and then transferred to the acceptor end of tRNA(Tyr). The protein is Tyrosine--tRNA ligase of Lactobacillus delbrueckii subsp. bulgaricus (strain ATCC 11842 / DSM 20081 / BCRC 10696 / JCM 1002 / NBRC 13953 / NCIMB 11778 / NCTC 12712 / WDCM 00102 / Lb 14).